Here is a 674-residue protein sequence, read N- to C-terminus: Methionine--tRNA ligase (674 aa).

The 'HIGH' region signature appears at 11–21; sequence PYANGDLHLGH. Zn(2+) is bound by residues cysteine 142, cysteine 145, cysteine 155, and cysteine 158. Residues 330-334 carry the 'KMSKS' region motif; it reads KMSKS. Lysine 333 is an ATP binding site. The tRNA-binding domain occupies 574 to 674; that stretch reads DFMKVDLRIA…EGAQPGMRVK (101 aa).

This sequence belongs to the class-I aminoacyl-tRNA synthetase family. MetG type 1 subfamily. As to quaternary structure, homodimer. It depends on Zn(2+) as a cofactor.

Its subcellular location is the cytoplasm. The enzyme catalyses tRNA(Met) + L-methionine + ATP = L-methionyl-tRNA(Met) + AMP + diphosphate. Its function is as follows. Is required not only for elongation of protein synthesis but also for the initiation of all mRNA translation through initiator tRNA(fMet) aminoacylation. The sequence is that of Methionine--tRNA ligase from Francisella tularensis subsp. tularensis (strain WY96-3418).